The primary structure comprises 571 residues: FAD-binding monooxygenase VdtE (571 aa).

Residues 44 to 47, 56 to 57, and Tyr-62 each bind FAD; these read VWYW and DS. An NADP(+)-binding site is contributed by 54–56; it reads RVD. NADP(+) is bound by residues 187–193 and 210–211; these read TGASAVQ and RT.

This sequence belongs to the FAD-binding monooxygenase family. FAD is required as a cofactor.

The enzyme catalyses 9,10-dihydroxy-7-methoxy-3-(2-oxopropyl)-1H-benzo[g]isochromen-1-one + NADPH + O2 + H(+) = methyl 2-[(3S)-9,10-dihydroxy-7-methoxy-1-oxo-1H,3H,4H-naphtho[2,3-c]pyran-3-yl]acetate + NADP(+) + H2O. The catalysed reaction is (3S)-9,10-dihydroxy-7-methoxy-3-(2-oxopropyl)-1H,3H,4H-naphtho[2,3-c]pyran-1-one + NADPH + O2 + H(+) = semiviriditoxin + NADP(+) + H2O. Its pathway is secondary metabolite biosynthesis. Functionally, FAD-binding monooxygenase; part of the gene cluster that mediates the biosynthesis of viriditoxin, one of the 'classical' secondary metabolites produced by fungi and that has antibacterial activity. The first step is performed by the polyketide synthase VdtA which condenses one acetyl-CoA and 6 malonyl-CoA units to form the heptaketide monomer backbone of viriditoxin. The product of VdtA is then O-methylated on C7 by the O-methyltransferase VdtC. The O-methyl group is important for the stereoselective coupling of the monomers at the final step of viriditoxin biosynthesis. The short-chain dehydrogenase/reductase VdtF then acts as a stereospecific reductase converting the pyrone to dihydropyrone via the reduction of the C3-C4 double bond. The FAD-binding monooxygenase VdtE then converts the ketone group into a methyl-ester group to yield semi-viriditoxin. Finally, the laccase VdtB is involved in dimerization of 2 semi-viriditoxin molecules to yield the final viriditoxin. VdtB is responsible for the regioselective 6,6'-coupling of semi-viriditoxin, which yields (M)-viriditoxin and (P)-viriditoxin at a ratio of 1:2. The non-catalytic carboxylesterase-like protein VdtD affects the stereochemistical outcome of the coupling. The highly reducing polyketide synthase VdtX is not involved in viriditoxin synthesis, but might possibly play a role in the production of additional metabolites not identified yet. The chain is FAD-binding monooxygenase VdtE from Byssochlamys spectabilis (Paecilomyces variotii).